The primary structure comprises 57 residues: UPF0057 membrane protein T23F2.5 (57 aa).

Transmembrane regions (helical) follow at residues 3-23 and 36-56; these read LTCTDIPKFLCALLLPPIGVW and ILLTILGYIPGIIHACYVILA.

This sequence belongs to the UPF0057 (PMP3) family.

The protein localises to the membrane. This chain is UPF0057 membrane protein T23F2.5, found in Caenorhabditis elegans.